Here is a 255-residue protein sequence, read N- to C-terminus: Small ribosomal subunit protein eS1 (255 aa).

A2 bears the N-acetylalanine; partial mark.

Belongs to the eukaryotic ribosomal protein eS1 family. Component of the small ribosomal subunit. Mature ribosomes consist of a small (40S) and a large (60S) subunit. The 40S subunit contains about 33 different proteins and 1 molecule of RNA (18S). The 60S subunit contains about 49 different proteins and 3 molecules of RNA (25S, 5.8S and 5S).

Its subcellular location is the cytoplasm. The polypeptide is Small ribosomal subunit protein eS1 (rps1) (Pyrenophora tritici-repentis (strain Pt-1C-BFP) (Wheat tan spot fungus)).